A 510-amino-acid chain; its full sequence is Probable RNA-binding protein 46 (510 aa).

The interval 23 to 42 (ENGQRKFGGPPPGWEGPPPP) is disordered. Over residues 31-42 (GPPPGWEGPPPP) the composition is skewed to pro residues. 3 consecutive RRM domains span residues 45–123 (REVF…VSLD), 125–207 (CRLF…WAEP), and 220–292 (RVLY…LAKP).

As to expression, expressed in the testis and ovary.

It localises to the cytoplasm. In terms of biological role, essential for male and female fertility, playing a crucial role in regulating germ cell development by ensuring the proper progression of meiosis prophase I. The protein is Probable RNA-binding protein 46 (rbm46) of Danio rerio (Zebrafish).